A 2094-amino-acid polypeptide reads, in one-letter code: Nuclear mitotic apparatus protein 1 (2094 aa).

The head (Globular) stretch occupies residues 1 to 210; it reads MTLHATRAAT…SPMGDILQTP (210 aa). Serine 160 carries the post-translational modification Phosphoserine. Threonine 161 carries the post-translational modification Phosphothreonine. Serine 167 and serine 201 each carry phosphoserine. At threonine 209 the chain carries Phosphothreonine. Residues 211 to 1681 are a coiled coil; sequence QFQMRRLKKQ…ADQQLRDLGK (1471 aa). Serine 269 carries the phosphoserine modification. Lysine 377 bears the N6-acetyllysine mark. A phosphoserine mark is found at serine 386 and serine 398. Lysine 443 is subject to N6-acetyllysine. Disordered regions lie at residues 617 to 636 and 723 to 759; these read QLQAANDARDNAQTSVTQAQ and LKEQQCRATEMEAESRSLMEQREREQKELEQEKAGRK. The segment covering 627–636 has biased composition (polar residues); that stretch reads NAQTSVTQAQ. Lysine 878 carries the post-translational modification N6-acetyllysine. Disordered stretches follow at residues 921–1000, 1081–1143, and 1173–1223; these read SLEL…TQER, LVKK…EGLT, and ELGH…SSLI. Positions 935–951 are enriched in polar residues; that stretch reads ASDQLGEQQGRPFSSTH. 2 stretches are compositionally biased toward basic and acidic residues: residues 956 to 972 and 983 to 998; these read AMEREAEQMGGELERLR and QEERGQQEREVARLTQ. Position 1183 is a phosphoserine (serine 1183). Basic and acidic residues predominate over residues 1194 to 1206; sequence KAQDHSKAEEEWK. Serine 1221 bears the Phosphoserine mark. The residue at position 1507 (lysine 1507) is an N6-acetyllysine. Position 1583 is a phosphoserine (serine 1583). A Glycyl lysine isopeptide (Lys-Gly) (interchain with G-Cter in SUMO2) cross-link involves residue lysine 1681. Positions 1681-1858 are membrane-binding domain 1; it reads KFQVATDALK…NSALLSLPGY (178 aa). The segment at 1682-2094 is tail (Globular); that stretch reads FQVATDALKS…TPRAKGKVKH (413 aa). 3 positions are modified to phosphoserine: serine 1703, serine 1706, and serine 1710. The tract at residues 1718–1743 is disordered; sequence SVASKLPRTQPDGTSVPGEPASPISQ. Positions 1724 to 1730 match the Tankyrase-binding domain motif; it reads PRTQPDG. Phosphoserine occurs at positions 1739 and 1742. Lysine 1748 participates in a covalent cross-link: Glycyl lysine isopeptide (Lys-Gly) (interchain with G-Cter in SUMO1); alternate. Lysine 1748 is covalently cross-linked (Glycyl lysine isopeptide (Lys-Gly) (interchain with G-Cter in SUMO2); alternate). Position 1751 is a phosphoserine (serine 1751). At serine 1754 the chain carries Phosphoserine; by PLK1. Tyrosine 1756 bears the Phosphotyrosine mark. A Phosphothreonine modification is found at threonine 1758. A disordered region spans residues 1760–1795; it reads TPARGQAPLETSLDSLGDAFPDSGRKTRSARRRTTQ. Positions 1770 to 1792 are 4.1-binding domain; that stretch reads TSLDSLGDAFPDSGRKTRSARRR. Serine 1771 is subject to Phosphoserine; by PLK1. Phosphoserine is present on residues serine 1774 and serine 1782. Threonine 1786 bears the Phosphothreonine mark. Lysine 1804 participates in a covalent cross-link: Glycyl lysine isopeptide (Lys-Gly) (interchain with G-Cter in SUMO2). 2 disordered regions span residues 1807–1883 and 1937–2094; these read LEEP…GRNS and EMKT…KVKH. Serine 1812 and serine 1815 each carry phosphoserine. The segment covering 1812 to 1839 has biased composition (polar residues); sequence SANSSFYSTQSAPASQANLRATSSTQSL. Serine 1816 is modified (phosphoserine; by PLK1). Tyrosine 1818 is modified (phosphotyrosine). The residue at position 1822 (serine 1822) is a Phosphoserine. Serine 1826 carries the phosphoserine; alternate modification. A glycan (O-linked (GlcNAc) serine; alternate) is linked at serine 1826. 2 positions are modified to phosphoserine: serine 1844 and serine 1869. The interval 1864-1967 is tubulin-binding domain; it reads SSARRSQARM…AEGVGITTRQ (104 aa). Residues 1874-1908 are GPSM2-binding domain; that stretch reads SSGAPQGRNSFYMGTCQDEPEQLDDWNRIAELQQR. Over residues 1937–1948 the composition is skewed to basic and acidic residues; it reads EMKTGDPRETLR. Residue serine 1951 is modified to Phosphoserine. A membrane-binding domain 2 region spans residues 1963 to 2042; that stretch reads ITTRQQRKRV…SILNTPKKLG (80 aa). Positions 1966 to 1971 match the Nuclear localization signal motif; that stretch reads RQQRKR. A phosphoserine mark is found at serine 1973 and serine 1974. The residue at position 1982 (threonine 1982) is a Phosphothreonine. At serine 1985 the chain carries Phosphoserine. The residue at position 1997 (threonine 1997) is a Phosphothreonine; by CDK1. The span at 1997–2006 shows a compositional bias: basic and acidic residues; it reads TPRDRHEGRK. A Phosphoserine modification is found at serine 2029. Position 2037 is a phosphothreonine (threonine 2037). Residues serine 2044 and serine 2059 each carry the phosphoserine modification. A Phosphoserine; by CDK1 modification is found at serine 2069. Low complexity predominate over residues 2073–2085; sequence ATTTTGTATVATT. A Phosphothreonine; by CDK1 modification is found at threonine 2085.

As to quaternary structure, homodimer. Also forms multiarm oligomers by association of C-terminal tail domains, oligomers may further assemble to form a hexagonal nuclear lattice-like network. Associates with the dynein-dynactin complex; this association promotes the transport and accumulation of NUMA1 at the mitotic spindle poles that is inhibited by the BRISC complex in a PLK1-dependent manner. Part of a spindle orientation complex at least composed of GNAI1, GPSM2 and NUMA1. Interacts (via C-terminus) with microtubules (MTs); this interaction is direct and promotes both MT bundle formation and stability in a dynein-dynactin complex- and CDK1-independent manner. Interacts with EPB41 and EPB41L2; these interactions are negatively regulated by CDK1 during metaphase and are important for anaphase-specific localization of NUMA1 in symmetrically dividing cells. Interacts (via C-terminus) with GPSM2 (via TPR repeats); this interaction is direct, prevented by competitive binding of INSC, is inhibited in a PLK1-dependent manner, blocks the association of NUMA1 with MTs and inhibits NUMA1-induced MT bundle formation, prevents the association of NUMA1 with SPAG5, induces mitotic spindle pole localization of GPSM2, both metaphase cell cortex localization of NUMA1 and mitotic spindle organization. Does not interact with GPSM2 during anaphase. Interacts (via C-terminus) with the nuclear importin alpha/importin beta receptor; this interaction is inhibited by RanGTP. Interacts (via C-terminus) with KPNB1; this interaction is inhibited by RanGTP and the BRISC complex. Interacts with ABRAXAS2 and the BRISC complex; these interactions regulate mitotic spindle assembly. Interacts (via N-terminal end of the coiled-coil domain) with RAE1; this interaction promotes mitotic spindle formation. Interacts (via C-terminus) with SPAG5 (via C-terminus); this interaction promotes the recruitment of SPAG5 to the MTs at spindle poles in a dynein-dynactin-dependent manner and regulates mitotic spindle organization and proper chromosome alignment during mitosis. Interacts with TNKS; this interaction occurs at the onset of mitosis. Interacts with TNKS2. Interacts with tubulin. Interacts with KHDC3 (via C-terminus). Post-translationally, phosphorylation and dephosphorylation on Thr-2037 regulates the extent of cortical NUMA1 and the dynein-dynactin complex localization during mitotic metaphase and anaphase. In metaphase, phosphorylation on Thr-2037 occurs in a kinase CDK1-dependent manner; this phosphorylation maintains low levels of cortical dynein-dynactin complex at metaphase, and hence proper spindle positioning. In anaphase, dephosphorylated on Thr-2037 by phosphatase PPP2CA; this dephosphorylation stimulates its membrane association and with the dynein-dynactin complex its enrichment at the cell cortex, and hence robust spindle elongation. Probably also phosphorylated on Thr-1997 and Ser-2069 by CDK1; these phosphorylations may regulate its cell cortex recruitment during metaphase and anaphase. Phosphorylated on Ser-1751, Ser-1754, Ser-1771 and Ser-1816 by PLK1; these phosphorylations induce cortical dynein-dynactin complex dissociation from the NUMA1-GPSM2 complex and negatively regulates cortical dynein-dynactin complex localization. ADP-ribosylated by TNKS at the onset of mitosis; ADP-ribosylation is not required for its localization to spindle poles. In terms of processing, O-glycosylated during cytokinesis at sites identical or close to phosphorylation sites, this interferes with the phosphorylation status. Post-translationally, ubiquitinated with 'Lys-63'-linked polyubiquitin chains. Deubiquitination by the BRISC complex is important for the incorporation of NUMA1 into mitotic spindle poles and normal spindle pole function, probably by modulating interactions between NUMA1, dynein-dynactin complex and importin-beta. As to expression, expressed in testis, speen, liver, lung, spinal cord and brain. Expressed in Purkinje neurons (at protein level).

It localises to the nucleus. It is found in the nucleoplasm. The protein localises to the nucleus matrix. Its subcellular location is the chromosome. The protein resides in the cytoplasm. It localises to the cytoskeleton. It is found in the microtubule organizing center. The protein localises to the centrosome. Its subcellular location is the spindle pole. The protein resides in the cell cortex. It localises to the cell membrane. It is found in the lateral cell membrane. In terms of biological role, microtubule (MT)-binding protein that plays a role in the formation and maintenance of the spindle poles and the alignement and the segregation of chromosomes during mitotic cell division. Functions to tether the minus ends of MTs at the spindle poles, which is critical for the establishment and maintenance of the spindle poles. Plays a role in the establishment of the mitotic spindle orientation during metaphase and elongation during anaphase in a dynein-dynactin-dependent manner. In metaphase, part of a ternary complex composed of GPSM2 and G(i) alpha proteins, that regulates the recruitment and anchorage of the dynein-dynactin complex in the mitotic cell cortex regions situated above the two spindle poles, and hence regulates the correct oritentation of the mitotic spindle. During anaphase, mediates the recruitment and accumulation of the dynein-dynactin complex at the cell membrane of the polar cortical region through direct association with phosphatidylinositol 4,5-bisphosphate (PI(4,5)P2), and hence participates in the regulation of the spindle elongation and chromosome segregation. Also binds to other polyanionic phosphoinositides, such as phosphatidylinositol 3-phosphate (PIP), lysophosphatidic acid (LPA) and phosphatidylinositol triphosphate (PIP3), in vitro. Also required for proper orientation of the mitotic spindle during asymmetric cell divisions. Plays a role in mitotic MT aster assembly. Involved in anastral spindle assembly. Positively regulates TNKS protein localization to spindle poles in mitosis. Highly abundant component of the nuclear matrix where it may serve a non-mitotic structural role, occupies the majority of the nuclear volume. Required for epidermal differentiation and hair follicle morphogenesis. The chain is Nuclear mitotic apparatus protein 1 from Mus musculus (Mouse).